Here is a 451-residue protein sequence, read N- to C-terminus: Phosphoglucosamine mutase (451 aa).

Catalysis depends on S107, which acts as the Phosphoserine intermediate. Mg(2+)-binding residues include S107, D246, D248, and D250. S107 is subject to Phosphoserine.

It belongs to the phosphohexose mutase family. Mg(2+) is required as a cofactor. Activated by phosphorylation.

The enzyme catalyses alpha-D-glucosamine 1-phosphate = D-glucosamine 6-phosphate. In terms of biological role, catalyzes the conversion of glucosamine-6-phosphate to glucosamine-1-phosphate. The protein is Phosphoglucosamine mutase of Burkholderia ambifaria (strain MC40-6).